A 282-amino-acid chain; its full sequence is MFAYKLLVDERGKRYLLKKNVEKFGTDLGIVDMKDIEEGVELKSHKGHTFYLVEPTMFDILKRMKRTVTTLLPKDIGFIIARAGIREGETVVEAGTGSGALTMYLSNAVGKTGKVITYDIRPEFAKVARKNLLRVGAIKKGQKIIGLDEEFDDEDEIEIEDGLFNVIQKIGDVREKIDEKDVDVIVLDLPDPWNVVENAKKALNKKRGRIVTYLPYIEQVKKTVEKLKEEGFWDIHTYEIIEREIEISEKGVRPSTRMIGHTGYITVARVPPEPLDREEEKE.

Residues 98–101 (SGAL), D119, D172, and D188 each bind S-adenosyl-L-methionine.

The protein belongs to the class I-like SAM-binding methyltransferase superfamily. TRM61 family. In terms of assembly, homotetramer composed of a dimer of dimers.

It catalyses the reaction adenosine(57)/adenosine(58) in tRNA + 2 S-adenosyl-L-methionine = N(1)-methyladenosine(57)/N(1)-methyladenosine(58) in tRNA + 2 S-adenosyl-L-homocysteine + 2 H(+). Functionally, catalyzes the S-adenosyl-L-methionine-dependent formation of N(1)-methyladenine at position 58 (m1A58) in tRNA. In Methanocaldococcus jannaschii (strain ATCC 43067 / DSM 2661 / JAL-1 / JCM 10045 / NBRC 100440) (Methanococcus jannaschii), this protein is tRNA (adenine(57)-N(1)/adenine(58)-N(1))-methyltransferase TrmI (trmI).